Reading from the N-terminus, the 443-residue chain is Postreplication repair E3 ubiquitin-protein ligase rad18 (443 aa).

The RING-type zinc-finger motif lies at 30 to 68 (CQVCKDFFDNPVITSCSHTFCSLCIRRCLSTEGKCPTCR). Residues 106-157 (GTDDSGDLAAEEPASKKRKIEPNAIVGTDGLPEEGIRTRSQSRGASRQPQAT) form a disordered region. Residues 143–157 (TRSQSRGASRQPQAT) are compositionally biased toward polar residues. The UBZ4-type zinc finger occupies 175–202 (LVPCPVCGRRMKEEAVFRHLDSCTGTAE). 4 residues coordinate Zn(2+): Cys-178, Cys-181, His-193, and Cys-197. One can recognise an SAP domain in the interval 239-273 (LKDTVLRKKLKDLGIPNWGPRALLQRRHTEWLNLW). Polar residues-rich tracts occupy residues 350-363 (IPNASQANSDTPRS) and 431-443 (PISSSASTHKTPH). The interval 350–443 (IPNASQANSD…SSASTHKTPH (94 aa)) is disordered.

It belongs to the RAD18 family. Interacts with E2 UBC2, forming a complex with ubiquitin ligase activity.

The protein localises to the nucleus. It catalyses the reaction S-ubiquitinyl-[E2 ubiquitin-conjugating enzyme]-L-cysteine + [acceptor protein]-L-lysine = [E2 ubiquitin-conjugating enzyme]-L-cysteine + N(6)-ubiquitinyl-[acceptor protein]-L-lysine.. The protein operates within protein modification; protein ubiquitination. In terms of biological role, E3 RING-finger protein, member of the UBC2/RAD6 epistasis group. Associates to the E2 ubiquitin conjugating enzyme UBC2/RAD6 to form the UBC2-RAD18 ubiquitin ligase complex involved in postreplicative repair (PRR) of damaged DNA. The chain is Postreplication repair E3 ubiquitin-protein ligase rad18 (uvsH) from Emericella nidulans (strain FGSC A4 / ATCC 38163 / CBS 112.46 / NRRL 194 / M139) (Aspergillus nidulans).